A 516-amino-acid polypeptide reads, in one-letter code: Monocarboxylate transporter 12 (516 aa).

Residues 1-50 (MPSGSHWTANSSKIITWLLEQPGKEEKRKTMAKVNRARSTSPPDGGWGWM) lie on the Cytoplasmic side of the membrane. 12 helical membrane passes run 51 to 73 (IVAG…SIFF), 88 to 108 (AWIH…GSVV), 116 to 136 (VGIM…SFAT), 145 to 165 (LGVL…AMVG), 178 to 198 (IAMS…QLLI), 207 to 227 (LLIL…MRPI), 283 to 303 (FVVL…LFVY), 319 to 339 (AFLM…FGWL), 350 to 370 (YVCY…LPML), 377 to 397 (VPFS…IPVV), 410 to 430 (ALGV…PIAG), and 440 to 460 (TAAF…LGFA). Residues 461 to 516 (RLIKRMRKTQLQFIAKESDPKLQLWTNGSVAYSVARELDQKHGEPVATAVPGYSLT) lie on the Cytoplasmic side of the membrane.

This sequence belongs to the major facilitator superfamily. Monocarboxylate porter (TC 2.A.1.13) family. In terms of assembly, interacts with isoform 2 of BSG; this interaction is required for its localization to the plasma membrane. Most highly expressed in kidney, followed by retina, lung, heart and testis. Very weakly expressed in brain and liver. Also detected in lens.

It localises to the cell membrane. It is found in the basolateral cell membrane. It carries out the reaction creatine(in) = creatine(out). It catalyses the reaction guanidinoacetate(in) = guanidinoacetate(out). Creatine uptake is inhibited by carbonyl cyanide 3-chlorophenylhydrazone (CCCP) and by valinomycin. Its function is as follows. Functions as a transporter for creatine and as well for its precursor guanidinoacetate. Transport of creatine and GAA is independent of resting membrane potential and extracellular Na(+), Cl(-), or pH. Contributes to the process of creatine biosynthesis and distribution. This chain is Monocarboxylate transporter 12, found in Homo sapiens (Human).